A 265-amino-acid chain; its full sequence is 4-hydroxy-tetrahydrodipicolinate reductase (265 aa).

NAD(+) contacts are provided by residues 7–12 and D33; that span reads GASGRM. R34 contributes to the NADP(+) binding site. NAD(+) is bound by residues 96–98 and 120–123; these read GTT and AANM. The active-site Proton donor/acceptor is the H153. H154 lines the (S)-2,3,4,5-tetrahydrodipicolinate pocket. K157 (proton donor) is an active-site residue. Position 163-164 (163-164) interacts with (S)-2,3,4,5-tetrahydrodipicolinate; it reads GT.

This sequence belongs to the DapB family.

It is found in the cytoplasm. It carries out the reaction (S)-2,3,4,5-tetrahydrodipicolinate + NAD(+) + H2O = (2S,4S)-4-hydroxy-2,3,4,5-tetrahydrodipicolinate + NADH + H(+). It catalyses the reaction (S)-2,3,4,5-tetrahydrodipicolinate + NADP(+) + H2O = (2S,4S)-4-hydroxy-2,3,4,5-tetrahydrodipicolinate + NADPH + H(+). It functions in the pathway amino-acid biosynthesis; L-lysine biosynthesis via DAP pathway; (S)-tetrahydrodipicolinate from L-aspartate: step 4/4. Catalyzes the conversion of 4-hydroxy-tetrahydrodipicolinate (HTPA) to tetrahydrodipicolinate. This chain is 4-hydroxy-tetrahydrodipicolinate reductase, found in Burkholderia ambifaria (strain MC40-6).